The sequence spans 243 residues: Leucyl/phenylalanyl-tRNA--protein transferase (243 aa).

A disordered region spans residues Met-1–Ala-22.

The protein belongs to the L/F-transferase family.

It localises to the cytoplasm. It carries out the reaction N-terminal L-lysyl-[protein] + L-leucyl-tRNA(Leu) = N-terminal L-leucyl-L-lysyl-[protein] + tRNA(Leu) + H(+). It catalyses the reaction N-terminal L-arginyl-[protein] + L-leucyl-tRNA(Leu) = N-terminal L-leucyl-L-arginyl-[protein] + tRNA(Leu) + H(+). The enzyme catalyses L-phenylalanyl-tRNA(Phe) + an N-terminal L-alpha-aminoacyl-[protein] = an N-terminal L-phenylalanyl-L-alpha-aminoacyl-[protein] + tRNA(Phe). In terms of biological role, functions in the N-end rule pathway of protein degradation where it conjugates Leu, Phe and, less efficiently, Met from aminoacyl-tRNAs to the N-termini of proteins containing an N-terminal arginine or lysine. The polypeptide is Leucyl/phenylalanyl-tRNA--protein transferase (Xylella fastidiosa (strain M23)).